A 396-amino-acid polypeptide reads, in one-letter code: Acyl-[acyl-carrier-protein] desaturase, chloroplastic (396 aa).

A chloroplast-targeting transit peptide spans 1–33; the sequence is MALKFHPLTSQSPKLPSFRMPQLASLRSPKFVM. Positions 138, 176, 179, 229, 262, and 265 each coordinate Fe cation.

This sequence belongs to the fatty acid desaturase type 2 family. Homodimer. Requires Fe(2+) as cofactor.

Its subcellular location is the plastid. It is found in the chloroplast. It participates in lipid metabolism; fatty acid metabolism. In terms of biological role, introduces a cis double bond in the acyl chain of an acyl-[acyl-carrier protein]. This chain is Acyl-[acyl-carrier-protein] desaturase, chloroplastic, found in Cucumis sativus (Cucumber).